Consider the following 205-residue polypeptide: Probable GTP-binding protein EngB (205 aa).

The EngB-type G domain occupies 22–196; that stretch reads NLPEVAFVGR…LKVLDEFIHK (175 aa). Residues 30-37, 57-61, 76-79, 143-146, and 175-177 contribute to the GTP site; these read GRSNVGKS, GRTQL, DLPG, TKVD, and FSA. Ser-37 and Thr-59 together coordinate Mg(2+).

Belongs to the TRAFAC class TrmE-Era-EngA-EngB-Septin-like GTPase superfamily. EngB GTPase family. Mg(2+) is required as a cofactor.

Necessary for normal cell division and for the maintenance of normal septation. This is Probable GTP-binding protein EngB from Desulforamulus reducens (strain ATCC BAA-1160 / DSM 100696 / MI-1) (Desulfotomaculum reducens).